Reading from the N-terminus, the 493-residue chain is Dipeptide permease D (493 aa).

Residues 1 to 13 lie on the Cytoplasmic side of the membrane; that stretch reads MNKHASQPRAIYY. Residues 14–34 traverse the membrane as a helical segment; that stretch reads VVALQIWEYFSFYGMRALLIL. The Periplasmic portion of the chain corresponds to 35–48; the sequence is YLTNQLKYNDTHAY. The chain crosses the membrane as a helical span at residues 49-69; sequence ELFSAYCSLVYVTPILGGFLA. At 70–77 the chain is on the cytoplasmic side; it reads DKVLGNRM. A helical membrane pass occupies residues 78–98; the sequence is AVMLGALLMAIGHVVLGASEI. At 99–100 the chain is on the periplasmic side; the sequence is HP. The helical transmembrane segment at 101–121 threads the bilayer; the sequence is SFLYLSLAIIVCGYGLFKSNV. Residues 122–137 lie on the Cytoplasmic side of the membrane; sequence SCLLGELYEPTDPRRD. The helical transmembrane segment at 138–158 threads the bilayer; the sequence is GGFSLMYAAGNVGSIIAPIAC. Over 159-166 the chain is Periplasmic; that stretch reads GYAQEEYS. Residues 167–187 form a helical membrane-spanning segment; sequence WAMGFGLAAVGMIAGLVIFLC. Over 188 to 211 the chain is Cytoplasmic; the sequence is GNRHFTHTRGVNKKVLRATNFLLP. Residues 212–232 form a helical membrane-spanning segment; that stretch reads NWGWLLVLLVATPALITVLFW. The Periplasmic segment spans residues 233 to 234; the sequence is KE. Residues 235–255 form a helical membrane-spanning segment; the sequence is WSVYALIVATIIGLGVLAKIY. Over 256–268 the chain is Cytoplasmic; the sequence is RKAENQKQRKELR. Residues 269–289 traverse the membrane as a helical segment; sequence LIVTLTFFSMLFWAFAQQGGS. The Periplasmic portion of the chain corresponds to 290-311; that stretch reads SISLYIDRFVNRDMFGYTVPTA. A helical membrane pass occupies residues 312 to 332; sequence MFQSINAFAVMLCGVFLAWVV. Residues 333 to 343 lie on the Cytoplasmic side of the membrane; sequence KESVAGNRTVR. A helical membrane pass occupies residues 344–364; it reads IWGKFALGLGLMSAGFCILTL. Residues 365 to 378 are Periplasmic-facing; the sequence is SARWSAMYGHSSLP. Residues 379 to 399 form a helical membrane-spanning segment; the sequence is LMVLGLAVMGFAELFIDPVAM. Topologically, residues 400 to 412 are cytoplasmic; that stretch reads SQITRIEIPGVTG. Residues 413–433 form a helical membrane-spanning segment; sequence VLTGIYMLLSGAIANYLAGVI. At 434 to 461 the chain is on the periplasmic side; sequence ADQTSQASFDASGAINYSINAYIEVFDQ. The helical transmembrane segment at 462–482 threads the bilayer; the sequence is ITWGALACVGVVLMIWLYQAL. Over 483 to 493 the chain is Cytoplasmic; that stretch reads KFRNRALALES.

This sequence belongs to the major facilitator superfamily. Proton-dependent oligopeptide transporter (POT/PTR) (TC 2.A.17) family. DtpD subfamily. Monomer in solution. Exhibits a doughnut-like shape with a central, shallow depression and has a diameter of 8 nm.

The protein localises to the cell inner membrane. In terms of biological role, probable proton-dependent permease that transports dipeptides. The polypeptide is Dipeptide permease D (dtpD) (Escherichia coli O157:H7).